The following is a 91-amino-acid chain: DNA-binding protein HU (91 aa).

The protein belongs to the bacterial histone-like protein family.

Histone-like DNA-binding protein which is capable of wrapping DNA to stabilize it, and thus to prevent its denaturation under extreme environmental conditions. Also seems to act as a fortuitous virulence factor in delayed sequelae by binding to heparan sulfate-proteoglycans in the extracellular matrix of target organs and acting as a nidus for in situ immune complex formation. In Streptococcus mutans serotype c (strain ATCC 700610 / UA159), this protein is DNA-binding protein HU (hup).